The chain runs to 554 residues: Terpene synthase 17 (554 aa).

Mg(2+)-binding residues include D306, D310, and E458. A DDXXD motif motif is present at residues 306–310 (DDTYD).

The protein belongs to the terpene synthase family. Tpsa subfamily. It depends on Mg(2+) as a cofactor. The cofactor is Mn(2+).

The enzyme catalyses (2E,6E)-farnesyl diphosphate = (+)-valencene + diphosphate. It catalyses the reaction (2E,6E)-farnesyl diphosphate = (E)-beta-farnesene + diphosphate. The catalysed reaction is (2E,6E)-farnesyl diphosphate = gamma-gurjunene + diphosphate. It carries out the reaction (2Z,6Z)-farnesyl diphosphate = beta-bisabolene + diphosphate. The enzyme catalyses (2Z,6Z)-farnesyl diphosphate = (E)-gamma-bisabolene + diphosphate. It catalyses the reaction (2E)-geranyl diphosphate = limonene + diphosphate. The catalysed reaction is (2E)-geranyl diphosphate = beta-myrcene + diphosphate. It carries out the reaction (2E)-geranyl diphosphate = (E)-beta-ocimene + diphosphate. The enzyme catalyses (2E)-geranyl diphosphate = terpinolene + diphosphate. It catalyses the reaction (2E)-geranyl diphosphate = gamma-terpinene + diphosphate. The catalysed reaction is (2Z,6Z)-farnesyl diphosphate = (Z)-gamma-bisabolene + diphosphate. It carries out the reaction (2E,6E)-farnesyl diphosphate = (1S,5S,6R)-alpha-bergamotene + diphosphate. The enzyme catalyses (2Z,6Z)-farnesyl diphosphate = (1S,5S,6S)-alpha-bergamotene + diphosphate. The protein operates within secondary metabolite biosynthesis; terpenoid biosynthesis. In terms of biological role, sesquiterpene synthase involved in the biosynthesis of volatile compounds. Mediates the conversion of (2E,6E)-farnesyl diphosphate (FPP) into gamma-gurjunene, (E)-beta-farnesene and (+)-valencene, and of (2Z,6Z)-farnesyl diphosphate ((ZZ)-FPP) into (E)-alpha-bergamotene and (Z)-gamma-bisabolene as well as beta-bisabolene, (Z)-alpha-bergamotene and (E)-gamma-bisabolene to a lower extent. Can act with a low efficiency as a monoterpene synthase with geranyl diphosphate (GPP) as substrate, thus producing beta-myrcene, (E)-beta-ocimene, limonene, terpinolene, gamma-terpinene and (Z)-beta-ocimene. This Solanum habrochaites (Wild tomato) protein is Terpene synthase 17.